We begin with the raw amino-acid sequence, 564 residues long: MRLSQFHLHTTKETPADAELVSHRLMLRAGMIRKLASGLYTWSPLGLRVLRKVEAIVREEMNRAGAVEVLFPTIQPRELWDATGRWEKFGGQLLKIKDRKEQEFCYSPTAEEAAAEFARQEINSYKQLPLNFYQIQTKFRDEIRPRFGVMRAREFLMKDAYSFHLTDEDMAREYDNMRAAYTRIFTRLGLDFRAVQADSGAIGGDASQEFHVIADSGEDSLAFSTGSDYAANVEAASAAPPAPRAAASEAMQQVATPTQKTCEDVAQLLGIALQRTVKSVAVMTQAGFVLVLVRGDHAVNEIKLAKVPGLADYRLANESEIREHLGCEPGFLGPVNTARPVRVVADRDVAALADFVVGANVSGAHLVGVNWGRDLPEPETVADVRNVVEGERAADGGELRLARGIEVGHVFQLGSQYAQALQATVIDEGGKAAVMKMGCYGIGISRIVAAAIEQNHDDAGIIWPAPMAPWQVVVCVINPKQDPQVLAAAQALLDQLLAAGLDAALDDRGLRPGAMFADMELLGIPHRVVVSERGLAAGTFEYRARTADAAESLDKAGLFSRLGH.

This sequence belongs to the class-II aminoacyl-tRNA synthetase family. ProS type 1 subfamily. Homodimer.

The protein resides in the cytoplasm. It carries out the reaction tRNA(Pro) + L-proline + ATP = L-prolyl-tRNA(Pro) + AMP + diphosphate. Functionally, catalyzes the attachment of proline to tRNA(Pro) in a two-step reaction: proline is first activated by ATP to form Pro-AMP and then transferred to the acceptor end of tRNA(Pro). As ProRS can inadvertently accommodate and process non-cognate amino acids such as alanine and cysteine, to avoid such errors it has two additional distinct editing activities against alanine. One activity is designated as 'pretransfer' editing and involves the tRNA(Pro)-independent hydrolysis of activated Ala-AMP. The other activity is designated 'posttransfer' editing and involves deacylation of mischarged Ala-tRNA(Pro). The misacylated Cys-tRNA(Pro) is not edited by ProRS. The polypeptide is Proline--tRNA ligase (Xanthomonas axonopodis pv. citri (strain 306)).